The primary structure comprises 126 residues: Large ribosomal subunit protein uL22 (126 aa).

Belongs to the universal ribosomal protein uL22 family. In terms of assembly, part of the 50S ribosomal subunit.

This protein binds specifically to 23S rRNA; its binding is stimulated by other ribosomal proteins, e.g. L4, L17, and L20. It is important during the early stages of 50S assembly. It makes multiple contacts with different domains of the 23S rRNA in the assembled 50S subunit and ribosome. In terms of biological role, the globular domain of the protein is located near the polypeptide exit tunnel on the outside of the subunit, while an extended beta-hairpin is found that lines the wall of the exit tunnel in the center of the 70S ribosome. The chain is Large ribosomal subunit protein uL22 from Cereibacter sphaeroides (strain ATCC 17029 / ATH 2.4.9) (Rhodobacter sphaeroides).